Consider the following 640-residue polypeptide: DNA mismatch repair protein MutL (640 aa).

Disordered regions lie at residues Pro332 to Pro353 and Pro408 to Asp431.

Belongs to the DNA mismatch repair MutL/HexB family.

In terms of biological role, this protein is involved in the repair of mismatches in DNA. It is required for dam-dependent methyl-directed DNA mismatch repair. May act as a 'molecular matchmaker', a protein that promotes the formation of a stable complex between two or more DNA-binding proteins in an ATP-dependent manner without itself being part of a final effector complex. The protein is DNA mismatch repair protein MutL of Chloroherpeton thalassium (strain ATCC 35110 / GB-78).